A 446-amino-acid chain; its full sequence is Citrate/sodium symporter (446 aa).

5 consecutive transmembrane segments (helical) span residues 23-43, 46-66, 79-99, 110-130, and 148-168; these read IFGM…LSHF, AIPT…AIFG, IGGA…AGIF, VMDK…GAIL, and ILAG…CFGI. Residues Ile-181 and Gly-183 each coordinate Na(+). Asn-186 and Gly-187 together coordinate citrate. 5 consecutive transmembrane segments (helical) span residues 213–233, 267–287, 289–309, 335–355, and 364–384; these read IAIL…LDMI, ETAV…VVAK, ILPS…LIVA, QLLW…QEII, and VIAA…GWLI. The Na(+) site is built by Met-399 and Asn-401. Residues Arg-402, Gly-404, Ser-405, and Arg-428 each coordinate citrate. The helical transmembrane segment at 425–445 threads the bilayer; the sequence is ISSRLGGGIVLVIASIVFSMM.

The protein belongs to the 2-hydroxycarboxylate transporter (2-HCT) (TC 2.A.24) family. As to quaternary structure, homodimer.

The protein resides in the cell inner membrane. The catalysed reaction is citrate(out) + 2 Na(+)(out) = citrate(in) + 2 Na(+)(in). Functionally, secondary active transporter that catalyzes the uptake of citrate across the membrane with the concomitant uptake of sodium. Is specific for citrate. The chain is Citrate/sodium symporter from Salmonella pullorum.